The primary structure comprises 879 residues: MIKSVLKVFGTQNDRIVKSYMKRVSNINVLESTYEPMSDEELQVAFNALRESVKSGEKSMEDVLYDSFAITREASKRVLGLRHYDVQMVGGMVLHDGNIAEMKTGEGKTLVATLAVVLNAMTGKGVHVVTVNDYLAKRDSSEMGELYNFLGYSVGCITADIQDDAGRKAQYDADITYGTNNEYGFDYLRDNMKVRLEEKVQREHNYAIVDEVDSILIDEARTPLIISGPTQRDQNHYARADAIAKQMERGEKIETKPGEDEKTTGDFIVDEKNRTIVMTEQGLQKAQDLFEVDNLYSLENAVLSHHLDQALKAHNIFEKDVDYVVQDNEIIIVDEFTGRLSEGRRYSEGLHQALEAKEGVEIQEESQTLAEITYQNYFRLYNKLAGMTGTAQTEATEFSQIYGLDVISIPTNVPVERADRNDLIYNTEKEKLDAVVRKVKEYHSKGQPVLIGTASIEKSEMIHERLKKEKIPHNILNAKNHAQEAEIIKNAGQKGAVTVATNMAGRGVDIKIDDEVRSLGGLAILGTERHESRRIDNQLRGRSGRQGDLGESQFFLSLDDNLLRIFGGEKIRNIMNRLGVEEGEYIDSKIVTRSVEKAQKKVENQHYESRKHILEYDDVANHQRKAIYAFRNQLLDPEFDIDAKIKENRAEYVHHMLAEAEIFEGMPKEDFDIEKLAALIKEELRIEVDPQYFKDKETEELEAMITEMMENIYEEKMSQLEPAQRNEIERILYLQVLDPQWRDHLYEMDVLKTGIGLRGYNQKDPLTEYKQDSYKLFTDLVERIKLEAVKVLHLVQFDFTSPEEEEEAIEQIREELESEVADASLNQSFEEGVIAEDSEKLKPITGTKKPKRNDPCPCGSGKKYKNCCGQSGPKKGLLA.

ATP-binding positions include Gln87, 105 to 109, and Asp509; that span reads GEGKT. Positions 834–879 are disordered; it reads IAEDSEKLKPITGTKKPKRNDPCPCGSGKKYKNCCGQSGPKKGLLA. 4 residues coordinate Zn(2+): Cys856, Cys858, Cys867, and Cys868.

Belongs to the SecA family. As to quaternary structure, monomer and homodimer. Part of the essential Sec protein translocation apparatus which comprises SecA, SecYEG and auxiliary proteins SecDF-YajC and YidC. It depends on Zn(2+) as a cofactor.

The protein resides in the cell inner membrane. It localises to the cytoplasm. It catalyses the reaction ATP + H2O + cellular proteinSide 1 = ADP + phosphate + cellular proteinSide 2.. Its function is as follows. Part of the Sec protein translocase complex. Interacts with the SecYEG preprotein conducting channel. Has a central role in coupling the hydrolysis of ATP to the transfer of proteins into and across the cell membrane, serving as an ATP-driven molecular motor driving the stepwise translocation of polypeptide chains across the membrane. The sequence is that of Protein translocase subunit SecA from Sulfurovum sp. (strain NBC37-1).